We begin with the raw amino-acid sequence, 263 residues long: 3-methyl-2-oxobutanoate hydroxymethyltransferase (263 aa).

Mg(2+) contacts are provided by D45 and D84. Residues 45–46 (DS), D84, and K112 contribute to the 3-methyl-2-oxobutanoate site. E114 contributes to the Mg(2+) binding site. E180 serves as the catalytic Proton acceptor.

This sequence belongs to the PanB family. As to quaternary structure, homodecamer; pentamer of dimers. Mg(2+) is required as a cofactor.

The protein resides in the cytoplasm. It carries out the reaction 3-methyl-2-oxobutanoate + (6R)-5,10-methylene-5,6,7,8-tetrahydrofolate + H2O = 2-dehydropantoate + (6S)-5,6,7,8-tetrahydrofolate. Its pathway is cofactor biosynthesis; (R)-pantothenate biosynthesis; (R)-pantoate from 3-methyl-2-oxobutanoate: step 1/2. In terms of biological role, catalyzes the reversible reaction in which hydroxymethyl group from 5,10-methylenetetrahydrofolate is transferred onto alpha-ketoisovalerate to form ketopantoate. The sequence is that of 3-methyl-2-oxobutanoate hydroxymethyltransferase from Citrobacter koseri (strain ATCC BAA-895 / CDC 4225-83 / SGSC4696).